The chain runs to 102 residues: Large ribosomal subunit protein bL21 (102 aa).

Belongs to the bacterial ribosomal protein bL21 family. In terms of assembly, part of the 50S ribosomal subunit. Contacts protein L20.

This protein binds to 23S rRNA in the presence of protein L20. This Bifidobacterium longum subsp. infantis (strain ATCC 15697 / DSM 20088 / JCM 1222 / NCTC 11817 / S12) protein is Large ribosomal subunit protein bL21.